Consider the following 172-residue polypeptide: GTP-dependent dephospho-CoA kinase (172 aa).

6 residues coordinate GTP: Asp-49, Val-50, Val-51, Asp-68, Lys-70, and Glu-120.

It belongs to the GTP-dependent DPCK family.

It catalyses the reaction 3'-dephospho-CoA + GTP = GDP + CoA + H(+). It participates in cofactor biosynthesis; coenzyme A biosynthesis. Functionally, catalyzes the GTP-dependent phosphorylation of the 3'-hydroxyl group of dephosphocoenzyme A to form coenzyme A (CoA). The chain is GTP-dependent dephospho-CoA kinase from Pyrobaculum arsenaticum (strain DSM 13514 / JCM 11321 / PZ6).